The chain runs to 591 residues: Aspartate--tRNA(Asp/Asn) ligase (591 aa).

Residue Glu-175 participates in L-aspartate binding. Residues 199 to 202 (QQFK) are aspartate. Residues Arg-221 and His-453 each coordinate L-aspartate. 221 to 223 (RDE) serves as a coordination point for ATP. An ATP-binding site is contributed by Glu-486. L-aspartate is bound at residue Arg-493. An ATP-binding site is contributed by 538–541 (GIDR).

The protein belongs to the class-II aminoacyl-tRNA synthetase family. Type 1 subfamily. As to quaternary structure, homodimer.

It is found in the cytoplasm. The catalysed reaction is tRNA(Asx) + L-aspartate + ATP = L-aspartyl-tRNA(Asx) + AMP + diphosphate. Its function is as follows. Aspartyl-tRNA synthetase with relaxed tRNA specificity since it is able to aspartylate not only its cognate tRNA(Asp) but also tRNA(Asn). Reaction proceeds in two steps: L-aspartate is first activated by ATP to form Asp-AMP and then transferred to the acceptor end of tRNA(Asp/Asn). In Cereibacter sphaeroides (strain ATCC 17025 / ATH 2.4.3) (Rhodobacter sphaeroides), this protein is Aspartate--tRNA(Asp/Asn) ligase.